Here is a 186-residue protein sequence, read N- to C-terminus: Cell division protein ZapC (186 aa).

The protein belongs to the ZapC family. Interacts directly with FtsZ.

Its subcellular location is the cytoplasm. Its function is as follows. Contributes to the efficiency of the cell division process by stabilizing the polymeric form of the cell division protein FtsZ. Acts by promoting interactions between FtsZ protofilaments and suppressing the GTPase activity of FtsZ. In Musicola paradisiaca (strain Ech703) (Dickeya paradisiaca), this protein is Cell division protein ZapC.